The chain runs to 400 residues: Large envelope protein (400 aa).

M1 is modified (N-acetylmethionine). 2 disordered regions span residues 1–20 (MGGW…SVPN) and 89–115 (STIP…LRDS). A lipid anchor (N-myristoyl glycine; by host) is attached at G2. Residues 2-119 (GGWSSKPRKG…PPLRDSHPQA (118 aa)) form a pre-S1 region. A pre-S region spans residues 2 to 174 (GGWSSKPRKG…SARTGDPVTN (173 aa)). At 2–181 (GGWSSKPRKG…VTNMENITSG (180 aa)) the chain is on the virion surface; in external conformation side. At 2–253 (GGWSSKPRKG…PGYRWMCLRR (252 aa)) the chain is on the intravirion; in internal conformation side. W4 carries an N-linked (GlcNAc...) asparagine glycan. Polar residues predominate over residues 89–106 (STIPPPASTNRQSGRQPT). The pre-S2 stretch occupies residues 120–174 (MQWNSTAFHQTLQDPRVRGLYLPAGGSSSGTVNPAPNIASHISSISARTGDPVTN). A helical transmembrane segment spans residues 182-202 (FLGPLLVLQAGFFLLTRILTI). Residues 203-253 (PQSLDSWWTSLNFLGGSPVCLGQNSQSPTSNHSPTSCPPICPGYRWMCLRR) lie on the Intravirion; in external conformation side of the membrane. The chain crosses the membrane as a helical span at residues 254–274 (FIIFLFILLLCLIFLLVLLDY). Residues 275 to 348 (QGMLPVCPLI…WASVRFSWLS (74 aa)) lie on the Virion surface side of the membrane. N320 carries N-linked (GlcNAc...) asparagine; by host; partial glycosylation. Residues 349–369 (LLVPFVQWFVGLSPTVWLSAI) form a helical membrane-spanning segment. Over 370–375 (WMMWYW) the chain is Intravirion. A helical membrane pass occupies residues 376-398 (GPSLYSIVSPFIPLLPIFFCLWV). At 399–400 (YI) the chain is on the virion surface side.

The protein belongs to the orthohepadnavirus major surface antigen family. In its internal form (Li-HBsAg), interacts with the capsid protein and with the isoform S. Interacts with host chaperone CANX. In terms of assembly, associates with host chaperone CANX through its pre-S2 N glycan; this association may be essential for isoform M proper secretion. As to quaternary structure, interacts with isoform L. Interacts with the antigens of satellite virus HDV (HDVAgs); this interaction is required for encapsidation of HDV genomic RNA. Isoform M is N-terminally acetylated by host at a ratio of 90%, and N-glycosylated by host at the pre-S2 region. In terms of processing, myristoylated.

The protein resides in the virion membrane. The large envelope protein exists in two topological conformations, one which is termed 'external' or Le-HBsAg and the other 'internal' or Li-HBsAg. In its external conformation the protein attaches the virus to cell receptors and thereby initiating infection. This interaction determines the species specificity and liver tropism. This attachment induces virion internalization predominantly through caveolin-mediated endocytosis. The large envelope protein also assures fusion between virion membrane and endosomal membrane. In its internal conformation the protein plays a role in virion morphogenesis and mediates the contact with the nucleocapsid like a matrix protein. Functionally, the middle envelope protein plays an important role in the budding of the virion. It is involved in the induction of budding in a nucleocapsid independent way. In this process the majority of envelope proteins bud to form subviral lipoprotein particles of 22 nm of diameter that do not contain a nucleocapsid. This is Large envelope protein from Hepatitis B virus genotype A2 subtype adw2 (strain Rutter 1979) (HBV-A).